A 213-amino-acid polypeptide reads, in one-letter code: Charged multivesicular body protein 2b (213 aa).

Residue Ala2 is modified to N-acetylalanine. Positions 25 to 55 form a coiled coil; it reads QRAIIRDRAALEKQEKQLELEIKKMAKIGNK. Positions 179 to 194 are enriched in low complexity; it reads AKAPSAARSLPSASTS. A disordered region spans residues 179–199; it reads AKAPSAARSLPSASTSKATIS. Ser199 bears the Phosphoserine mark. The MIT-interacting motif motif lies at 201-211; the sequence is EEIERQLKALG.

It belongs to the SNF7 family. In terms of assembly, probable core component of the endosomal sorting required for transport complex III (ESCRT-III). ESCRT-III components are thought to multimerize to form a flat lattice on the perimeter membrane of the endosome. Several assembly forms of ESCRT-III may exist that interact and act sequentially. Interacts with CHMP2A. Interacts with VPS4A. Interacts with VPS4B; the interaction is direct. In terms of tissue distribution, in brain, it is expressed in all neuronal populations with a relatively enhanced expression in the hippocampus, frontal and temporal lobes and in both granule and Purkinje cells of the cerebellum. Not expressed in astrocytes or oligodendrocytes.

It localises to the cytoplasm. Its subcellular location is the cytosol. The protein resides in the late endosome membrane. Its function is as follows. Probable core component of the endosomal sorting required for transport complex III (ESCRT-III) which is involved in multivesicular bodies (MVBs) formation and sorting of endosomal cargo proteins into MVBs. MVBs contain intraluminal vesicles (ILVs) that are generated by invagination and scission from the limiting membrane of the endosome and mostly are delivered to lysosomes enabling degradation of membrane proteins, such as stimulated growth factor receptors, lysosomal enzymes and lipids. The MVB pathway appears to require the sequential function of ESCRT-O, -I,-II and -III complexes. ESCRT-III proteins mostly dissociate from the invaginating membrane before the ILV is released. The ESCRT machinery also functions in topologically equivalent membrane fission events, such as the terminal stages of cytokinesis. ESCRT-III proteins are believed to mediate the necessary vesicle extrusion and/or membrane fission activities, possibly in conjunction with the AAA ATPase VPS4. This chain is Charged multivesicular body protein 2b (Chmp2b), found in Mus musculus (Mouse).